The chain runs to 443 residues: Glutamate--tRNA ligase 2 (443 aa).

Positions 7-17 (PSPTGLIHVGN) match the 'HIGH' region motif. Residues 240–244 (KLSKR) carry the 'KMSKS' region motif. Lys-243 provides a ligand contact to ATP.

Belongs to the class-I aminoacyl-tRNA synthetase family. Glutamate--tRNA ligase type 1 subfamily. As to quaternary structure, monomer.

It localises to the cytoplasm. The enzyme catalyses tRNA(Glu) + L-glutamate + ATP = L-glutamyl-tRNA(Glu) + AMP + diphosphate. Catalyzes the attachment of glutamate to tRNA(Glu) in a two-step reaction: glutamate is first activated by ATP to form Glu-AMP and then transferred to the acceptor end of tRNA(Glu). In Gluconacetobacter diazotrophicus (strain ATCC 49037 / DSM 5601 / CCUG 37298 / CIP 103539 / LMG 7603 / PAl5), this protein is Glutamate--tRNA ligase 2.